The following is a 223-amino-acid chain: MKFAVLVFPGSNCDRDMFNAAIKSGVEAEYVDYRETSLSGFDGVLIPGGFSFGDYLRSGAMASVAPIISEVKRLAAEGKPVLGVCNGFQILTEIGLLPGALLHNDSHLFISRNEELEIVNNQTAFTNLYEQGEKVIYPVAHGEGHYYCTDEIYQQLKANNQIILKYVNNPNGSYDDIAGIVNKKGNVCGMMPHPERALETLLGTDSGVKLFEAMVKSWREQHV.

Positions 3-223 constitute a Glutamine amidotransferase type-1 domain; it reads FAVLVFPGSN…MVKSWREQHV (221 aa). The active-site Nucleophile is the Cys-85. Residues His-193 and Glu-195 contribute to the active site.

As to quaternary structure, part of the FGAM synthase complex composed of 1 PurL, 1 PurQ and 2 PurS subunits.

The protein resides in the cytoplasm. The catalysed reaction is N(2)-formyl-N(1)-(5-phospho-beta-D-ribosyl)glycinamide + L-glutamine + ATP + H2O = 2-formamido-N(1)-(5-O-phospho-beta-D-ribosyl)acetamidine + L-glutamate + ADP + phosphate + H(+). The enzyme catalyses L-glutamine + H2O = L-glutamate + NH4(+). It functions in the pathway purine metabolism; IMP biosynthesis via de novo pathway; 5-amino-1-(5-phospho-D-ribosyl)imidazole from N(2)-formyl-N(1)-(5-phospho-D-ribosyl)glycinamide: step 1/2. Its function is as follows. Part of the phosphoribosylformylglycinamidine synthase complex involved in the purines biosynthetic pathway. Catalyzes the ATP-dependent conversion of formylglycinamide ribonucleotide (FGAR) and glutamine to yield formylglycinamidine ribonucleotide (FGAM) and glutamate. The FGAM synthase complex is composed of three subunits. PurQ produces an ammonia molecule by converting glutamine to glutamate. PurL transfers the ammonia molecule to FGAR to form FGAM in an ATP-dependent manner. PurS interacts with PurQ and PurL and is thought to assist in the transfer of the ammonia molecule from PurQ to PurL. This is Phosphoribosylformylglycinamidine synthase subunit PurQ from Staphylococcus aureus (strain MSSA476).